A 156-amino-acid polypeptide reads, in one-letter code: Small ribosomal subunit protein uS7 (156 aa).

Belongs to the universal ribosomal protein uS7 family. Part of the 30S ribosomal subunit. Contacts proteins S9 and S11.

Functionally, one of the primary rRNA binding proteins, it binds directly to 16S rRNA where it nucleates assembly of the head domain of the 30S subunit. Is located at the subunit interface close to the decoding center, probably blocks exit of the E-site tRNA. The sequence is that of Small ribosomal subunit protein uS7 from Aster yellows witches'-broom phytoplasma (strain AYWB).